The sequence spans 215 residues: Glutathione S-transferase D4 (215 aa).

A GST N-terminal domain is found at 1 to 80 (MDFYYSPRSS…YLVEKYGKDD (80 aa)). Glutathione-binding positions include serine 9, 50-52 (HTI), and 64-66 (ESR). Positions 86–207 (DPQKRALINQ…KGLLQMKTMY (122 aa)) constitute a GST C-terminal domain.

The protein belongs to the GST superfamily. Delta family. Homodimer.

It catalyses the reaction RX + glutathione = an S-substituted glutathione + a halide anion + H(+). In terms of biological role, conjugation of reduced glutathione to a wide number of exogenous and endogenous hydrophobic electrophiles. May be involved in detoxification. This Drosophila melanogaster (Fruit fly) protein is Glutathione S-transferase D4.